The sequence spans 255 residues: Imidazole glycerol phosphate synthase subunit HisF (255 aa).

Active-site residues include Asp-12 and Asp-131.

It belongs to the HisA/HisF family. In terms of assembly, heterodimer of HisH and HisF.

It localises to the cytoplasm. It catalyses the reaction 5-[(5-phospho-1-deoxy-D-ribulos-1-ylimino)methylamino]-1-(5-phospho-beta-D-ribosyl)imidazole-4-carboxamide + L-glutamine = D-erythro-1-(imidazol-4-yl)glycerol 3-phosphate + 5-amino-1-(5-phospho-beta-D-ribosyl)imidazole-4-carboxamide + L-glutamate + H(+). It participates in amino-acid biosynthesis; L-histidine biosynthesis; L-histidine from 5-phospho-alpha-D-ribose 1-diphosphate: step 5/9. Functionally, IGPS catalyzes the conversion of PRFAR and glutamine to IGP, AICAR and glutamate. The HisF subunit catalyzes the cyclization activity that produces IGP and AICAR from PRFAR using the ammonia provided by the HisH subunit. This chain is Imidazole glycerol phosphate synthase subunit HisF, found in Salinispora tropica (strain ATCC BAA-916 / DSM 44818 / JCM 13857 / NBRC 105044 / CNB-440).